We begin with the raw amino-acid sequence, 602 residues long: Myotubularin (602 aa).

Positions 1 to 40 (MASSSASDCDAHPVERESMRKVSQDGVRQDMSKSGPRLPG) are disordered. A compositionally biased stretch (basic and acidic residues) spans 9–31 (CDAHPVERESMRKVSQDGVRQDM). S18 carries the phosphoserine modification. The GRAM domain maps to 28–97 (RQDMSKSGPR…GVISRIEKMG (70 aa)). One can recognise a Myotubularin phosphatase domain in the interval 163–538 (GWAIYNPVEE…RHLELWVNYY (376 aa)). A 1,2-diacyl-sn-glycero-3-phospho-(1D-myo-inositol-3,5-bisphosphate) contacts are provided by N288, N313, and I314. Residues N288, N313, and I314 each contribute to the a 1,2-diacyl-sn-glycero-3-phospho-(1D-myo-inositol-3-phosphate) site. C375 (phosphocysteine intermediate) is an active-site residue. S376, D377, G378, W379, D380, R381, K417, and R421 together coordinate a 1,2-diacyl-sn-glycero-3-phospho-(1D-myo-inositol-3,5-bisphosphate). A 1,2-diacyl-sn-glycero-3-phospho-(1D-myo-inositol-3-phosphate)-binding residues include S376, D377, G378, W379, D380, and R381. Residue R421 coordinates a 1,2-diacyl-sn-glycero-3-phospho-(1D-myo-inositol-3-phosphate). Phosphothreonine is present on T495. Over residues 578 to 592 (PTKLTDSSTPPSGSA) the composition is skewed to polar residues. Residues 578–602 (PTKLTDSSTPPSGSAQIAPRMQTHF) form a disordered region.

It belongs to the protein-tyrosine phosphatase family. Non-receptor class myotubularin subfamily. As to quaternary structure, heterodimer with MTMR12. Interacts with KMT2A/MLL1 (via SET domain). Interacts with DES in skeletal muscle but not in cardiac muscle. Interacts with SPEG.

It localises to the cytoplasm. It is found in the cell membrane. Its subcellular location is the cell projection. The protein resides in the filopodium. The protein localises to the ruffle. It localises to the late endosome. It is found in the myofibril. Its subcellular location is the sarcomere. It carries out the reaction a 1,2-diacyl-sn-glycero-3-phospho-(1D-myo-inositol-3-phosphate) + H2O = a 1,2-diacyl-sn-glycero-3-phospho-(1D-myo-inositol) + phosphate. It catalyses the reaction a 1,2-diacyl-sn-glycero-3-phospho-(1D-myo-inositol-3,5-bisphosphate) + H2O = a 1,2-diacyl-sn-glycero-3-phospho-(1D-myo-inositol-5-phosphate) + phosphate. The enzyme catalyses 1,2-dioctanoyl-sn-glycero-3-phospho-(1-D-myo-inositol-3-phosphate) + H2O = 1,2-dioctanoyl-sn-glycero-3-phospho-(1D-myo-inositol) + phosphate. The catalysed reaction is 1,2-dioctanoyl-sn-glycero-3-phospho-(1D-myo-inositol-3,5-bisphosphate) + H2O = 1,2-dioctanoyl-sn-glycero-3-phospho-(1D-myo-inositol-5-phosphate) + phosphate. It carries out the reaction 1,2-dihexadecanoyl-sn-glycero-3-phospho-(1D-myo-inositol-3,5-phosphate) + H2O = 1,2-dihexadecanoyl-sn-glycero-3-phospho-(1D-myo-inositol-5-phosphate) + phosphate. Its activity is regulated as follows. Allosterically activated by phosphatidylinositol 5-phosphate (PI5P). In terms of biological role, lipid phosphatase which dephosphorylates phosphatidylinositol 3-monophosphate (PI3P) and phosphatidylinositol 3,5-bisphosphate (PI(3,5)P2). Has also been shown to dephosphorylate phosphotyrosine- and phosphoserine-containing peptides. Negatively regulates EGFR degradation through regulation of EGFR trafficking from the late endosome to the lysosome. Plays a role in vacuolar formation and morphology. Regulates desmin intermediate filament assembly and architecture. Plays a role in mitochondrial morphology and positioning. Required for skeletal muscle maintenance but not for myogenesis. In skeletal muscles, stabilizes MTMR12 protein levels. The protein is Myotubularin of Rattus norvegicus (Rat).